A 192-amino-acid polypeptide reads, in one-letter code: dTTP/UTP pyrophosphatase (192 aa).

Residue aspartate 70 is the Proton acceptor of the active site.

The protein belongs to the Maf family. YhdE subfamily. A divalent metal cation is required as a cofactor.

It localises to the cytoplasm. The enzyme catalyses dTTP + H2O = dTMP + diphosphate + H(+). It catalyses the reaction UTP + H2O = UMP + diphosphate + H(+). Nucleoside triphosphate pyrophosphatase that hydrolyzes dTTP and UTP. May have a dual role in cell division arrest and in preventing the incorporation of modified nucleotides into cellular nucleic acids. This is dTTP/UTP pyrophosphatase from Clostridium perfringens (strain SM101 / Type A).